Here is a 324-residue protein sequence, read N- to C-terminus: Annexin A10 (324 aa).

4 Annexin repeats span residues 17–88 (FNPM…GLMY), 89–160 (PPPS…NLVQ), 171–243 (AMAA…AIVR), and 247–318 (DKPS…AICA).

It belongs to the annexin family.

The sequence is that of Annexin A10 (Anxa10) from Mus musculus (Mouse).